Consider the following 305-residue polypeptide: 17-beta-hydroxysteroid dehydrogenase type 3 (305 aa).

Gly44–Leu73 is an NADP(+) binding site. Residue Ser181 participates in substrate binding. The active-site Proton acceptor is the Tyr194.

The protein belongs to the short-chain dehydrogenases/reductases (SDR) family. 17-beta-HSD 3 subfamily. In terms of tissue distribution, expressed in the testes.

It is found in the endoplasmic reticulum. It catalyses the reaction a 17beta-hydroxy steroid + NADP(+) = a 17-oxo steroid + NADPH + H(+). The catalysed reaction is testosterone + NADP(+) = androst-4-ene-3,17-dione + NADPH + H(+). The enzyme catalyses 17beta-estradiol + NADP(+) = estrone + NADPH + H(+). It carries out the reaction 3beta-hydroxyandrost-5-en-17-one + NADPH + H(+) = androst-5-en-3beta,17beta-diol + NADP(+). It catalyses the reaction 17beta-hydroxy-5alpha-androstan-3-one + NADP(+) = 5alpha-androstan-3,17-dione + NADPH + H(+). The catalysed reaction is androsterone + NADPH + H(+) = 5alpha-androstane-3alpha,17beta-diol + NADP(+). The enzyme catalyses 3beta-hydroxy-5alpha-androstan-17-one + NADPH + H(+) = 5alpha-androstane-3beta,17beta-diol + NADP(+). It carries out the reaction androst-4-ene-3,11,17-trione + NADPH + H(+) = 17beta-hydroxyandrost-4-ene-3,11-dione + NADP(+). It catalyses the reaction 11beta-hydroxyandrost-4-ene-3,17-dione + NADPH + H(+) = 11beta,17beta-dihydroxyandrost-4-ene-3-one + NADP(+). It functions in the pathway hormone biosynthesis; testosterone biosynthesis. It participates in steroid metabolism. Its function is as follows. Catalyzes the conversion of 17-oxosteroids to 17beta-hydroxysteroids. Favors the reduction of androstenedione to testosterone. Testosterone is the key androgen driving male development and function. Uses NADPH while the two other EDH17B enzymes use NADH. Androgens such as epiandrosterone, dehydroepiandrosterone, androsterone and androstanedione are accepted as substrates and reduced at C-17. Can reduce 11-ketoandrostenedione as well as 11beta-hydroxyandrostenedione at C-17 to the respective testosterone forms. Plays a role in the rate-limiting-step for the maximum level of testosterone production by the testis but does not affect basal testosterone production. The sequence is that of 17-beta-hydroxysteroid dehydrogenase type 3 from Mus musculus (Mouse).